The chain runs to 214 residues: Molybdenum cofactor guanylyltransferase (214 aa).

GTP-binding positions include 18–20, Lys-31, Asp-77, and Asp-112; that span reads LAG. Residue Asp-112 participates in Mg(2+) binding.

It belongs to the MobA family. As to quaternary structure, monomer. The cofactor is Mg(2+).

Its subcellular location is the cytoplasm. The catalysed reaction is Mo-molybdopterin + GTP + H(+) = Mo-molybdopterin guanine dinucleotide + diphosphate. Its function is as follows. Transfers a GMP moiety from GTP to Mo-molybdopterin (Mo-MPT) cofactor (Moco or molybdenum cofactor) to form Mo-molybdopterin guanine dinucleotide (Mo-MGD) cofactor. This Rhodopseudomonas palustris (strain HaA2) protein is Molybdenum cofactor guanylyltransferase.